The primary structure comprises 2346 residues: Myomegalin (2346 aa).

Coiled coils occupy residues 41–132 (REDI…LVEA), 162–205 (DQYT…LLEE), 238–318 (DSHL…REML), and 350–684 (CSQL…RQYL). Glu252 carries the post-translational modification Phosphoserine. A disordered region spans residues 698–732 (NQQAEVTPTGRLGKQTDQGSMQIPSRDDSTSLTAK). At Thr704 the chain carries Phosphothreonine. Basic and acidic residues predominate over residues 722-732 (SRDDSTSLTAK). Coiled-coil stretches lie at residues 743–936 (GDLD…TLAA), 1002–1043 (LQEE…SSVS), 1096–1124 (SSLQ…EQLV), 1212–1240 (STQH…SEAT), 1346–1385 (GKSE…LSVT), and 1431–1455 (GLQA…LPKN). The interval 1193–1214 (DNQSQPRDPGPQSAFSLPGSTQ) is disordered. The segment covering 1205–1214 (SAFSLPGSTQ) has biased composition (polar residues). Residues 1551-1642 (KDHKSEKDQA…EEKKASPSHS (92 aa)) enclose the Olduvai domain. Over residues 1591–1600 (SLTPSSSHAL) the composition is skewed to low complexity. 2 disordered regions span residues 1591-1614 (SLTP…SFLS) and 1633-1690 (EEKK…EANQ). A compositionally biased stretch (polar residues) spans 1652-1690 (AVLSSKPSSTSASQGAKAESNSNPISLPTPQNTPKEANQ). 2 coiled-coil regions span residues 1736–1760 (VVSL…ASTV) and 1840–2077 (GADL…QQLE). Disordered regions lie at residues 2081–2103 (GKAS…PGNK) and 2127–2156 (VFPS…TSPV). A compositionally biased stretch (polar residues) spans 2085-2103 (LSPSSINQNFPASTDPGNK). A coiled-coil region spans residues 2273 to 2312 (ESTERELLELRTKVSKQERLLQSTTEHLKNANQQKESMEQ).

As to quaternary structure, interacts with PDE4D. Isoform 13 interacts with MAPRE1 and MAPRE3. Isoform 13 forms a pericentrosomal complex with AKAP9, CDK5RAP2 and EB1/MAPRE1; within this complex, may mediate MAPRE1-binding to CDK5RAP2. Interaction of isoform 13 with AKAP9 stabilizes both proteins. Isoform 13 interacts (via N-terminus) with CAMSAP2; this interaction is much stronger in the presence of AKAP9. In complex with AKAP9, Isoform 13 recruits CAMSAP2 to the Golgi apparatus. Isoform 13 interacts with unglycosylated LGALS3BP; this interaction may connect the pericentrosomal complex to the gamma-tubulin ring complex (gamma-TuRC) to promote microtubule assembly and acetylation. Highly expressed in adult and fetal heart, in skeletal muscle and, to a lower extent, in brain and placenta.

It is found in the golgi apparatus. Its subcellular location is the cytoplasm. The protein resides in the cytoskeleton. The protein localises to the microtubule organizing center. It localises to the centrosome. Its function is as follows. Functions as an anchor sequestering components of the cAMP-dependent pathway to Golgi and/or centrosomes. Participates in microtubule dynamics, promoting microtubule assembly. Depending upon the cell context, may act at the level of the Golgi apparatus or that of the centrosome. In complex with AKAP9, recruits CAMSAP2 to the Golgi apparatus and tethers non-centrosomal minus-end microtubules to the Golgi, an important step for polarized cell movement. In complex with AKAP9, EB1/MAPRE1 and CDK5RAP2, contributes to microtubules nucleation and extension from the centrosome to the cell periphery, a crucial process for directed cell migration, mitotic spindle orientation and cell-cycle progression. The chain is Myomegalin (PDE4DIP) from Homo sapiens (Human).